A 605-amino-acid chain; its full sequence is MDPAEAVLQEKALKFMCSMPRSLWLGCSSLADSMPSLRCLYNPGTGALTAFQNSSEREDCNNGEPPRKIIPEKNSLRQTYNSCARLCLNQETVCLASTAMKTENCVAKTKLANGTSSMIVPKQRKLSASYEKEKELCVKYFEQWSESDQVEFVEHLISQMCHYQHGHINSYLKPMLQRDFITALPARGLDHIAENILSYLDAKSLCAAELVCKEWYRVTSDGMLWKKLIERMVRTDSLWRGLAERRGWGQYLFKNKPPDGNAPPNSFYRALYPKIIQDIETIESNWRCGRHSLQRIHCRSETSKGVYCLQYDDQKIVSGLRDNTIKIWDKNTLECKRILTGHTGSVLCLQYDERVIITGSSDSTVRVWDVNTGEMLNTLIHHCEAVLHLRFNNGMMVTCSKDRSIAVWDMASPTDITLRRVLVGHRAAVNVVDFDDKYIVSASGDRTIKVWNTSTCEFVRTLNGHKRGIACLQYRDRLVVSGSSDNTIRLWDIECGACLRVLEGHEELVRCIRFDNKRIVSGAYDGKIKVWDLVAALDPRAPAGTLCLRTLVEHSGRVFRLQFDEFQIVSSSHDDTILIWDFLNDPAAQAEPPRSPSRTYTYISR.

The segment at 128–177 (ASYEKEKELCVKYFEQWSESDQVEFVEHLISQMCHYQHGHINSYLKPMLQ) is homodimerization domain D. Positions 190 to 228 (DHIAENILSYLDAKSLCAAELVCKEWYRVTSDGMLWKKL) constitute an F-box domain. The required for down-regulation of SNAI1 stretch occupies residues 190–228 (DHIAENILSYLDAKSLCAAELVCKEWYRVTSDGMLWKKL). WD repeat units follow at residues 301–338 (ETSK…CKRI), 341–378 (GHTG…MLNT), 381–418 (HHCE…DITL), 424–461 (GHRA…FVRT), 464–503 (GHKR…RVLE), 505–541 (HEEL…DPRA), and 553–590 (EHSG…AAQA).

Homodimer. Self-associates. Component of the SCF(BTRC) complex formed of CUL1, SKP1, RBX1 and a BTRC dimer. Direct interaction with SKP1 occurs via the F-box domain. Interacts with phosphorylated ubiquitination substrates SMAD3 and SMAD4. Interacts with phosphorylated ubiquitination substrates CTNNB1, NFKBIA, NFKBIB, NFKBIE, NFKB1/nuclear factor NF-kappa-B p105 subunit, ATF4, CDC25A, DLG1, FBXO5 and SNAI1; the interaction requires the phosphorylation of the 2 serine residues in the substrate destruction motif D-S-G-X(2,3,4)-S. Binds UBQLN1. Interacts with CDC34 and UBE2R2. Interacts with FBXW11. Interacts with CUL4A and DDB1. Part of a SCF(BTRC)-like complex lacking CUL1, which is associated with phosphorylated NKBIA and RELA; RELA interacts directly with NFKBIA. Interacts with the phosphorylated form of GLI3. Interacts with CLU. Interacts with PER1 (phosphorylated), PER2 (phosphorylated) and PER3. Interacts with phosphorylated ubiquitination substrate CEP68. Interacts with ZC3H12A; this interaction occurs when ZC3H12A is phosphorylated in a IKBKB/IKKB-dependent manner. Interacts with HSF1; this interaction occurs during mitosis and induces HSF1 ubiquitin-dependent degradation, a process inhibited by CDC20. Interacts with NFE2L1. Interacts with INAVA. Interacts with IL10RA; this interaction leads to IL10RA ubiquitination and subsequent degradation. Interacts with REST. Interacts with KLF4; this interaction leads to KLF4 ubiquitination and subsequent degradation. Interacts with UBR2, as part of a SCF(BTRC) complex; the interaction mediates 'Lys-48'-linked ubiquitination of UBR2 and is regulated by DUSP22 in the T-cell receptor signaling pathway. In terms of assembly, (Microbial infection) Interacts with vaccinia virus A49; this interaction inhibits NF-kappa-B activation. As to quaternary structure, (Microbial infection) Interacts with HIV-1 Vpu. Ubiquitinated. Deubiquitinated by OTUD5, promoting its stability. Expressed in epididymis (at protein level).

It localises to the cytoplasm. The protein localises to the nucleus. Its pathway is protein modification; protein ubiquitination. In terms of biological role, substrate recognition component of a SCF (SKP1-CUL1-F-box protein) E3 ubiquitin-protein ligase complex which mediates the ubiquitination and subsequent proteasomal degradation of target proteins. Recognizes and binds to phosphorylated target proteins. SCF(BTRC) mediates the ubiquitination of CTNNB1 and participates in Wnt signaling. SCF(BTRC) mediates the ubiquitination of phosphorylated NFKB1, ATF4, CDC25A, DLG1, FBXO5, PER1, SMAD3, SMAD4, SNAI1 and probably NFKB2. SCF(BTRC) mediates the ubiquitination of NFKBIA, NFKBIB and NFKBIE; the degradation frees the associated NFKB1 to translocate into the nucleus and to activate transcription. Ubiquitination of NFKBIA occurs at 'Lys-21' and 'Lys-22'. The SCF(FBXW11) complex also regulates NF-kappa-B by mediating ubiquitination of phosphorylated NFKB1: specifically ubiquitinates the p105 form of NFKB1, leading to its degradation. SCF(BTRC) mediates the ubiquitination of CEP68; this is required for centriole separation during mitosis. SCF(BTRC) mediates the ubiquitination and subsequent degradation of nuclear NFE2L1. Has an essential role in the control of the clock-dependent transcription via degradation of phosphorylated PER1 and PER2. May be involved in ubiquitination and subsequent proteasomal degradation through a DBB1-CUL4 E3 ubiquitin-protein ligase. Required for activation of NFKB-mediated transcription by IL1B, MAP3K14, MAP3K1, IKBKB and TNF. Required for proteolytic processing of GLI3. Mediates ubiquitination of REST, thereby leading to its proteasomal degradation. SCF(BTRC) mediates the ubiquitination and subsequent proteasomal degradation of KLF4; thereby negatively regulating cell pluripotency maintenance and embryogenesis. SCF(BTRC) acts as a regulator of mTORC1 signaling pathway by catalyzing ubiquitination and subsequent proteasomal degradation of phosphorylated DEPTOR, TFE3 and MITF. SCF(BTRC) directs 'Lys-48'-linked ubiquitination of UBR2 in the T-cell receptor signaling pathway. This chain is F-box/WD repeat-containing protein 1A (BTRC), found in Homo sapiens (Human).